The primary structure comprises 605 residues: Elongation factor 4 (605 aa).

The tr-type G domain occupies A5–K187. Residues D17–T22 and N134–D137 each bind GTP.

The protein belongs to the TRAFAC class translation factor GTPase superfamily. Classic translation factor GTPase family. LepA subfamily.

It localises to the cell inner membrane. It carries out the reaction GTP + H2O = GDP + phosphate + H(+). Its function is as follows. Required for accurate and efficient protein synthesis under certain stress conditions. May act as a fidelity factor of the translation reaction, by catalyzing a one-codon backward translocation of tRNAs on improperly translocated ribosomes. Back-translocation proceeds from a post-translocation (POST) complex to a pre-translocation (PRE) complex, thus giving elongation factor G a second chance to translocate the tRNAs correctly. Binds to ribosomes in a GTP-dependent manner. The protein is Elongation factor 4 of Novosphingobium aromaticivorans (strain ATCC 700278 / DSM 12444 / CCUG 56034 / CIP 105152 / NBRC 16084 / F199).